The primary structure comprises 106 residues: Urease subunit beta (106 aa).

Belongs to the urease beta subunit family. Heterotrimer of UreA (gamma), UreB (beta) and UreC (alpha) subunits. Three heterotrimers associate to form the active enzyme.

The protein localises to the cytoplasm. It catalyses the reaction urea + 2 H2O + H(+) = hydrogencarbonate + 2 NH4(+). The protein operates within nitrogen metabolism; urea degradation; CO(2) and NH(3) from urea (urease route): step 1/1. This chain is Urease subunit beta, found in Alkalilimnicola ehrlichii (strain ATCC BAA-1101 / DSM 17681 / MLHE-1).